Consider the following 236-residue polypeptide: ATP synthase subunit a (236 aa).

The next 5 membrane-spanning stretches (helical) occupy residues Ser-18–Thr-38, Gly-79–Val-99, Asp-112–Val-132, Ile-174–Gly-194, and Trp-205–Tyr-227.

The protein belongs to the ATPase A chain family. F-type ATPases have 2 components, CF(1) - the catalytic core - and CF(0) - the membrane proton channel. CF(1) has five subunits: alpha(3), beta(3), gamma(1), delta(1), epsilon(1). CF(0) has three main subunits: a(1), b(2) and c(9-12). The alpha and beta chains form an alternating ring which encloses part of the gamma chain. CF(1) is attached to CF(0) by a central stalk formed by the gamma and epsilon chains, while a peripheral stalk is formed by the delta and b chains.

The protein resides in the cell membrane. In terms of biological role, key component of the proton channel; it plays a direct role in the translocation of protons across the membrane. This is ATP synthase subunit a from Lysinibacillus sphaericus (strain C3-41).